Here is a 508-residue protein sequence, read N- to C-terminus: Aspartyl/glutamyl-tRNA(Asn/Gln) amidotransferase subunit B (508 aa).

The protein belongs to the GatB/GatE family. GatB subfamily. Heterotrimer of A, B and C subunits.

It carries out the reaction L-glutamyl-tRNA(Gln) + L-glutamine + ATP + H2O = L-glutaminyl-tRNA(Gln) + L-glutamate + ADP + phosphate + H(+). The enzyme catalyses L-aspartyl-tRNA(Asn) + L-glutamine + ATP + H2O = L-asparaginyl-tRNA(Asn) + L-glutamate + ADP + phosphate + 2 H(+). Its function is as follows. Allows the formation of correctly charged Asn-tRNA(Asn) or Gln-tRNA(Gln) through the transamidation of misacylated Asp-tRNA(Asn) or Glu-tRNA(Gln) in organisms which lack either or both of asparaginyl-tRNA or glutaminyl-tRNA synthetases. The reaction takes place in the presence of glutamine and ATP through an activated phospho-Asp-tRNA(Asn) or phospho-Glu-tRNA(Gln). The polypeptide is Aspartyl/glutamyl-tRNA(Asn/Gln) amidotransferase subunit B (Salinibacter ruber (strain DSM 13855 / M31)).